Reading from the N-terminus, the 766-residue chain is MTITTENKTVTHILGYPRVGSQRELKFAQEKYWRGEIEQNELKEVGSLLRHRHWGDQVGAGLDYVSVGDFAWYDHVLNTSMLLGHIPKRHDNGFPDLDTLFRIARGKAPTGCSCAASDMTKWFNTNYHYIVPEFTEDDQFNVSWQQLFGEVAEAKKAGHKVKPVLLGPVSYLWLGKEKEEGFDRLSLLPRLLAAYQKILSKLEALGVEWVQIDEPVLALELPKPWAESFKLAYQVLNGNTKLLLTTYFDNITHHLDKIVELNIDGLHVDLSAAPEQLNAVVDALPENWVLSAGVVNGRNVWRADLSHVLDVLQPVKAKLGQRLWVGSSCSLLHSPIDLDLETDLSPEVRQWLSFAKQKCREFLVAQALDGNAIAIQECAKYSAPIKARATSALVNNPDVRQRTNAITAALAERTAPYAERTRQQRAALNLPLLPTTTIGSFPQTNEIRTQRRDFKAGYLTEADYNTALKGHIADAIQRQEDLDLDVFVHGEAERNDMVEYFAELLEGFAVTRFGWVQSYGSRCVKPAVIVSDIYRAKPMTVEWTTYAQSLTDKLVKGMLTGPVTILGWTFPREDLPRQGIANQIALALRDEVSDLQAAGIKIIQIDEPAIREGLPLKESQWQAYLDWAVNAFKISAASAEPQTQIHTHMCYSEFNHIIKSVAALDADVITIETSRSDMELLKAFEEFDYPNEIGPGVYDIHSPNIPSIEQIVHLVEKAETLIPIERLWINPDCGLKTRNWEETEAALRSMVEATKKLREQWQEKAV.

Residues 23 to 26 (RELK) and K121 contribute to the 5-methyltetrahydropteroyltri-L-glutamate site. L-homocysteine is bound by residues 438–440 (IGS) and E491. Residues 438 to 440 (IGS) and E491 each bind L-methionine. Residues 522–523 (RC) and W568 each bind 5-methyltetrahydropteroyltri-L-glutamate. D606 serves as a coordination point for L-homocysteine. D606 contacts L-methionine. E612 serves as a coordination point for 5-methyltetrahydropteroyltri-L-glutamate. 3 residues coordinate Zn(2+): H648, C650, and E672. H701 functions as the Proton donor in the catalytic mechanism. A Zn(2+)-binding site is contributed by C733.

It belongs to the vitamin-B12 independent methionine synthase family. Zn(2+) is required as a cofactor.

The enzyme catalyses 5-methyltetrahydropteroyltri-L-glutamate + L-homocysteine = tetrahydropteroyltri-L-glutamate + L-methionine. Its pathway is amino-acid biosynthesis; L-methionine biosynthesis via de novo pathway; L-methionine from L-homocysteine (MetE route): step 1/1. Catalyzes the transfer of a methyl group from 5-methyltetrahydrofolate to homocysteine resulting in methionine formation. This is 5-methyltetrahydropteroyltriglutamate--homocysteine methyltransferase from Photobacterium profundum (strain SS9).